Consider the following 152-residue polypeptide: Ribosome maturation factor RimP (152 aa).

Belongs to the RimP family.

It localises to the cytoplasm. Its function is as follows. Required for maturation of 30S ribosomal subunits. In Proteus mirabilis (strain HI4320), this protein is Ribosome maturation factor RimP.